The sequence spans 278 residues: Achaete-scute homolog 5 (278 aa).

Positions 1–66 (MPMGAAERGA…GPFGGGLALG (66 aa)) are disordered. The 53-residue stretch at 155–207 (AFIQKRNERERQRVKCVNEGYARLRGHLPGALAEKRLSKVETLRAAIRYIKYL) folds into the bHLH domain. Positions 214–278 (APDGSTPPAS…PFLESEESWH (65 aa)) are disordered. The segment covering 230–239 (GPCPAPPATP) has biased composition (pro residues). Over residues 240-249 (RPDRPGDGEA) the composition is skewed to basic and acidic residues. A compositionally biased stretch (low complexity) spans 252–271 (PSSLVPESSESSCFSPSPFL).

In terms of assembly, interacts with transcription factor TCF3/E12.

The protein localises to the nucleus. In terms of biological role, transcription factor. Probably binds E-box motifs 5'-CANNTG-3' in complex with transcription factor TCF3/E12. Negatively modulates transcription of target genes such as CDH1/E-cadherin, perhaps by recruiting the PRC2 repressive complex to regulatory elements. Regulates ameloblast development and tooth germ growth, perhaps acting by positively modulating migration of inner enamel epithelium (IEE) cells. Plays a role in enamel formation. This Homo sapiens (Human) protein is Achaete-scute homolog 5 (ASCL5).